Here is a 365-residue protein sequence, read N- to C-terminus: MRSEAERQRSFRAWPHTCRTVSPAELARSGFYYLGPGDRVQCFSCGGVLRSWEPGDRPDTEHRKFFPSCPFLQVRRGPPGGTDSVDGQILGQLSGEEPDRTWEPVCPQMAGEGDRLGSFSTWPRYANGDPQQLAGAGFFYTGHRDHVKCFHCDGGLRNWEQGDDPWTEHAKWFPMCDFLLQVKGEAFIRSVQESFFSSPETSPESVGSYEGSPVSSPGSPPVCPFLSTSVAQGALQMGFKRNRVSSLMINRFILTGSCYGSVSELVTDLIQAEEIHGTESVSVPRAPTQRERPEPPKEPAPPLSTEEQLRQLKEERMCKVCMDNDVSMVFVPCGHLVVCTECAPNLRHCPICRAAIRGSVRAFMS.

2 BIR repeats span residues 7–73 (RQRS…PFLQ) and 115–180 (RLGS…DFLL). Positions 149, 152, 169, and 176 each coordinate Zn(2+). A self-inhibits the anti-apoptotic function region spans residues 186–234 (AFIRSVQESFFSSPETSPESVGSYEGSPVSSPGSPPVCPFLSTSVAQGA). Position 198 is a phosphoserine (serine 198). Residue serine 202 is modified to Phosphoserine; by MAPK1. Serine 212 bears the Phosphoserine mark. Serine 216 and serine 219 each carry phosphoserine; by MAPK1. The interval 278-306 (TESVSVPRAPTQRERPEPPKEPAPPLSTE) is disordered. Residues 288–297 (TQRERPEPPK) show a composition bias toward basic and acidic residues. An RING-type zinc finger spans residues 318–353 (CKVCMDNDVSMVFVPCGHLVVCTECAPNLRHCPICR).

This sequence belongs to the IAP family. Auto-ubiquitinated, and degraded in a 2-step mechanism; a caspase-independent first step and a caspase-dependent second step. Post-translationally, phosphorylated via MAPK-dependent and CDK-dependent pathways during oocyte maturation. Phosphorylation does not appear to affect caspase inhibition or autoubiquitination activity.

It localises to the cytoplasm. The enzyme catalyses S-ubiquitinyl-[E2 ubiquitin-conjugating enzyme]-L-cysteine + [acceptor protein]-L-lysine = [E2 ubiquitin-conjugating enzyme]-L-cysteine + N(6)-ubiquitinyl-[acceptor protein]-L-lysine.. Its function is as follows. Weak apoptotic suppressor. Has E3 ubiquitin-protein ligase activity. Weak inhibitor of caspase activity. This chain is Baculoviral IAP repeat-containing protein 7 (birc7), found in Xenopus tropicalis (Western clawed frog).